We begin with the raw amino-acid sequence, 186 residues long: TATA-box-binding protein F (186 aa).

Tandem repeats lie at residues 10–86 (IENV…FDDL) and 101–179 (VQNI…NDRL).

This sequence belongs to the TBP family.

In terms of biological role, general factor that plays a role in the activation of archaeal genes transcribed by RNA polymerase. Binds specifically to the TATA box promoter element which lies close to the position of transcription initiation. The protein is TATA-box-binding protein F (tbpF) of Halobacterium salinarum (strain ATCC 700922 / JCM 11081 / NRC-1) (Halobacterium halobium).